We begin with the raw amino-acid sequence, 728 residues long: MGRRKKIVEQCERLMDNPEQIRNIAIAAHVDHGKTTLTDNLLAGAGMISEDTAGQQLAMDTEEDEQERGITIDAANVSMTHEYEGDDHLINLIDTPGHVDFGGDVTRAMRAVDGALVVVDAVEGAMPQTETVVRQALREGVKPTLFINKVDRLISELQEGPEEMQERLLSVIGDVNELIRGMTEEKDDIEDWTVSVEDGTVAFGSALYKWGVSMPSMQRTGMDFGDIIDLERSDKREELHEQTPLADVVLDMVAEHFPNPIDAQPRRIPTVWRGDADSEIAESMRLVDEDGEVVLMVTDIGVDPHAGEIAAGRVFSGTLEKGQELYVSGTAGKNRVQSVGIYMGGEREEVDEVPAGNIAAVTGLKDAIAGSTVSNEEMTPFESIDHISEPVITKSIEAQNMDDLPKLIETLRQVSKEDPTISIEINEDTGEHLISGQGELHLEVQTQRIERNQGIPVTTGEPIVVYRETPTSDSQEVEGVSPNRHNKFYITVEQLSDDVLEEIRLGEVSMDMPEQERREVLQEAGMDKETSQDVENIIGRNIFIDDTKGIQHLNETMELVVDGLTDSLEDGPLAAEPVEGALIRLHDARLHEDAIHRGPAQVIPATRDAVHRALIDADIRLLEPIQDVRIDVPSEHMGAASGEVQGRRGRVDDMYQEGDLMVVEGIAPVDEMIGFSSDIRSATEGRASWNTENAGFRVMADNLQREIIMEIRERKGMKTELPESITHF.

One can recognise a tr-type G domain in the interval 19–261 (EQIRNIAIAA…MVAEHFPNPI (243 aa)). GTP is bound by residues 28-35 (AHVDHGKT), 94-98 (DTPGH), and 148-151 (NKVD). The residue at position 596 (His596) is a Diphthamide.

The protein belongs to the TRAFAC class translation factor GTPase superfamily. Classic translation factor GTPase family. EF-G/EF-2 subfamily.

Its subcellular location is the cytoplasm. Catalyzes the GTP-dependent ribosomal translocation step during translation elongation. During this step, the ribosome changes from the pre-translocational (PRE) to the post-translocational (POST) state as the newly formed A-site-bound peptidyl-tRNA and P-site-bound deacylated tRNA move to the P and E sites, respectively. Catalyzes the coordinated movement of the two tRNA molecules, the mRNA and conformational changes in the ribosome. In Halobacterium salinarum (strain ATCC 29341 / DSM 671 / R1), this protein is Elongation factor 2.